The following is a 130-amino-acid chain: Small ribosomal subunit protein uS8 (130 aa).

It belongs to the universal ribosomal protein uS8 family. As to quaternary structure, part of the 30S ribosomal subunit.

Functionally, one of the primary rRNA binding proteins, it binds directly to 16S rRNA central domain where it helps coordinate assembly of the platform of the 30S subunit. In Thermococcus gammatolerans (strain DSM 15229 / JCM 11827 / EJ3), this protein is Small ribosomal subunit protein uS8.